The following is a 170-amino-acid chain: Cytochrome c-type biogenesis protein CcmE (170 aa).

Over 1–7 (MTRKQRR) the chain is Cytoplasmic. Residues 8 to 28 (LTIIGGALFVLAVAAGLVLNA) traverse the membrane as a helical; Signal-anchor for type II membrane protein segment. Residues 29-170 (LRDSIVFFST…GEKTAAGATQ (142 aa)) lie on the Periplasmic side of the membrane. 2 residues coordinate heme: His122 and Tyr126. Residues 137-146 (KQGHWKDDYG) show a composition bias toward basic and acidic residues. The interval 137–170 (KQGHWKDDYGKPQAAKPGPVSMREGEKTAAGATQ) is disordered.

This sequence belongs to the CcmE/CycJ family.

It localises to the cell inner membrane. Heme chaperone required for the biogenesis of c-type cytochromes. Transiently binds heme delivered by CcmC and transfers the heme to apo-cytochromes in a process facilitated by CcmF and CcmH. The polypeptide is Cytochrome c-type biogenesis protein CcmE (Bradyrhizobium sp. (strain BTAi1 / ATCC BAA-1182)).